Here is a 644-residue protein sequence, read N- to C-terminus: Exoribonuclease 2 (644 aa).

Residues 189–516 (RQDLTALNFV…NHRLLKAVIK (328 aa)) form the RNB domain. Residues 561–643 (NTRFAAEIID…ETRSIIARPA (83 aa)) form the S1 motif domain.

The protein belongs to the RNR ribonuclease family. RNase II subfamily.

Its subcellular location is the cytoplasm. It carries out the reaction Exonucleolytic cleavage in the 3'- to 5'-direction to yield nucleoside 5'-phosphates.. Involved in mRNA degradation. Hydrolyzes single-stranded polyribonucleotides processively in the 3' to 5' direction. In Salmonella newport (strain SL254), this protein is Exoribonuclease 2.